The sequence spans 443 residues: ATP-dependent protease ATPase subunit HslU (443 aa).

ATP-binding positions include Ile-18 and 60–65; that span reads GVGKTE. The disordered stretch occupies residues 141–165; it reads DQWGQNEENDTDSSTRQSFRKKLRE. Residues Asp-256, Glu-321, and Arg-393 each coordinate ATP.

Belongs to the ClpX chaperone family. HslU subfamily. A double ring-shaped homohexamer of HslV is capped on each side by a ring-shaped HslU homohexamer. The assembly of the HslU/HslV complex is dependent on binding of ATP.

The protein resides in the cytoplasm. Its function is as follows. ATPase subunit of a proteasome-like degradation complex; this subunit has chaperone activity. The binding of ATP and its subsequent hydrolysis by HslU are essential for unfolding of protein substrates subsequently hydrolyzed by HslV. HslU recognizes the N-terminal part of its protein substrates and unfolds these before they are guided to HslV for hydrolysis. This Photobacterium profundum (strain SS9) protein is ATP-dependent protease ATPase subunit HslU.